The following is a 208-amino-acid chain: 3-demethoxyubiquinol 3-hydroxylase (208 aa).

The Fe cation site is built by E57, E87, H90, E139, E171, and H174.

The protein belongs to the COQ7 family. Requires Fe cation as cofactor.

The protein resides in the cell membrane. The catalysed reaction is a 5-methoxy-2-methyl-3-(all-trans-polyprenyl)benzene-1,4-diol + AH2 + O2 = a 3-demethylubiquinol + A + H2O. The protein operates within cofactor biosynthesis; ubiquinone biosynthesis. Functionally, catalyzes the hydroxylation of 2-nonaprenyl-3-methyl-6-methoxy-1,4-benzoquinol during ubiquinone biosynthesis. The protein is 3-demethoxyubiquinol 3-hydroxylase of Burkholderia lata (strain ATCC 17760 / DSM 23089 / LMG 22485 / NCIMB 9086 / R18194 / 383).